Reading from the N-terminus, the 151-residue chain is Deoxyuridine 5'-triphosphate nucleotidohydrolase (151 aa).

Residues 70–72 (RSG), Asn-83, 87–89 (LID), and Lys-97 each bind substrate.

This sequence belongs to the dUTPase family. The cofactor is Mg(2+).

The catalysed reaction is dUTP + H2O = dUMP + diphosphate + H(+). Its pathway is pyrimidine metabolism; dUMP biosynthesis; dUMP from dCTP (dUTP route): step 2/2. Its function is as follows. This enzyme is involved in nucleotide metabolism: it produces dUMP, the immediate precursor of thymidine nucleotides and it decreases the intracellular concentration of dUTP so that uracil cannot be incorporated into DNA. The polypeptide is Deoxyuridine 5'-triphosphate nucleotidohydrolase (Idiomarina loihiensis (strain ATCC BAA-735 / DSM 15497 / L2-TR)).